Here is a 61-residue protein sequence, read N- to C-terminus: MSEIEGIVKSGVIIPLKPLTELEGKKIKIKIVDAESVDAEKLYSYLRLLREGEDARDFFKI.

Belongs to the UPF0165 family.

In terms of biological role, possibly the antitoxin component of a type II toxin-antitoxin (TA) system. In Aeropyrum pernix (strain ATCC 700893 / DSM 11879 / JCM 9820 / NBRC 100138 / K1), this protein is Putative antitoxin APE_0472b.1.